The chain runs to 328 residues: Phosphatidate cytidylyltransferase (328 aa).

Residues 15–29 are compositionally biased toward polar residues; sequence SGRSATKSVTTNDAG. The segment at 15–50 is disordered; sequence SGRSATKSVTTNDAGTGNPAEQPARGAKQQPATETS. 7 helical membrane-spanning segments follow: residues 58–78, 103–123, 124–144, 173–193, 202–222, 239–259, and 263–283; these read AAIV…VFVP, AGYL…VWLT, WPFG…VCMI, ATVF…MLVY, FCMM…GVLF, GFAG…TFLV, and PWIG…GDLV.

This sequence belongs to the CDS family.

It is found in the cell membrane. It carries out the reaction a 1,2-diacyl-sn-glycero-3-phosphate + CTP + H(+) = a CDP-1,2-diacyl-sn-glycerol + diphosphate. The protein operates within phospholipid metabolism; CDP-diacylglycerol biosynthesis; CDP-diacylglycerol from sn-glycerol 3-phosphate: step 3/3. The protein is Phosphatidate cytidylyltransferase (cdsA) of Mycobacterium tuberculosis (strain CDC 1551 / Oshkosh).